Here is an 86-residue protein sequence, read N- to C-terminus: Anti-adapter protein IraP (86 aa).

The stretch at 1–38 forms a coiled coil; it reads MKNLIAELLVKLAQKEEEAKELTVQVEALEIVVTALLR.

Belongs to the IraP family. As to quaternary structure, interacts with RssB.

The protein localises to the cytoplasm. In terms of biological role, inhibits RpoS proteolysis by regulating RssB activity, thereby increasing the stability of the sigma stress factor RpoS especially during phosphate starvation, but also in stationary phase and during nitrogen starvation. Its effect on RpoS stability is due to its interaction with RssB, which probably blocks the interaction of RssB with RpoS, and the consequent delivery of the RssB-RpoS complex to the ClpXP protein degradation pathway. This chain is Anti-adapter protein IraP, found in Klebsiella pneumoniae (strain 342).